The following is a 122-amino-acid chain: Large ribosomal subunit protein uL14 (122 aa).

This sequence belongs to the universal ribosomal protein uL14 family. In terms of assembly, part of the 50S ribosomal subunit. Forms a cluster with proteins L3 and L19. In the 70S ribosome, L14 and L19 interact and together make contacts with the 16S rRNA in bridges B5 and B8.

Functionally, binds to 23S rRNA. Forms part of two intersubunit bridges in the 70S ribosome. The chain is Large ribosomal subunit protein uL14 from Psychrobacter arcticus (strain DSM 17307 / VKM B-2377 / 273-4).